Here is a 598-residue protein sequence, read N- to C-terminus: DNA mismatch repair protein MutL (598 aa).

It belongs to the DNA mismatch repair MutL/HexB family.

Its function is as follows. This protein is involved in the repair of mismatches in DNA. It is required for dam-dependent methyl-directed DNA mismatch repair. May act as a 'molecular matchmaker', a protein that promotes the formation of a stable complex between two or more DNA-binding proteins in an ATP-dependent manner without itself being part of a final effector complex. The polypeptide is DNA mismatch repair protein MutL (Geotalea daltonii (strain DSM 22248 / JCM 15807 / FRC-32) (Geobacter daltonii)).